The primary structure comprises 344 residues: tRNA N6-adenosine threonylcarbamoyltransferase (344 aa).

Positions 112 and 116 each coordinate Fe cation. Residues 134-138, aspartate 167, glycine 180, and asparagine 280 contribute to the substrate site; that span reads LASGG. Fe cation is bound at residue aspartate 308.

It belongs to the KAE1 / TsaD family. It depends on Fe(2+) as a cofactor.

The protein resides in the cytoplasm. It catalyses the reaction L-threonylcarbamoyladenylate + adenosine(37) in tRNA = N(6)-L-threonylcarbamoyladenosine(37) in tRNA + AMP + H(+). Functionally, required for the formation of a threonylcarbamoyl group on adenosine at position 37 (t(6)A37) in tRNAs that read codons beginning with adenine. Is involved in the transfer of the threonylcarbamoyl moiety of threonylcarbamoyl-AMP (TC-AMP) to the N6 group of A37, together with TsaE and TsaB. TsaD likely plays a direct catalytic role in this reaction. The chain is tRNA N6-adenosine threonylcarbamoyltransferase from Rickettsia massiliae (strain Mtu5).